Here is a 368-residue protein sequence, read N- to C-terminus: Flagellar P-ring protein 1 (368 aa).

Positions 1–24 are cleaved as a signal peptide; sequence MIFKQIRRLIAAALLAALSLPAAA.

It belongs to the FlgI family. As to quaternary structure, the basal body constitutes a major portion of the flagellar organelle and consists of four rings (L,P,S, and M) mounted on a central rod.

It is found in the periplasm. Its subcellular location is the bacterial flagellum basal body. Functionally, assembles around the rod to form the L-ring and probably protects the motor/basal body from shearing forces during rotation. This Chromobacterium violaceum (strain ATCC 12472 / DSM 30191 / JCM 1249 / CCUG 213 / NBRC 12614 / NCIMB 9131 / NCTC 9757 / MK) protein is Flagellar P-ring protein 1.